Reading from the N-terminus, the 337-residue chain is Glyceraldehyde-3-phosphate dehydrogenase, cytosolic (337 aa).

NAD(+)-binding positions include 13–14 (RI), Asp-35, and Arg-82. Residues 153-155 (SCT), Thr-184, 213-214 (TG), and Arg-236 each bind D-glyceraldehyde 3-phosphate. Cys-154 serves as the catalytic Nucleophile. Asn-318 contacts NAD(+).

It belongs to the glyceraldehyde-3-phosphate dehydrogenase family. Homotetramer.

Its subcellular location is the cytoplasm. The enzyme catalyses D-glyceraldehyde 3-phosphate + phosphate + NAD(+) = (2R)-3-phospho-glyceroyl phosphate + NADH + H(+). It functions in the pathway carbohydrate degradation; glycolysis; pyruvate from D-glyceraldehyde 3-phosphate: step 1/5. Functionally, key enzyme in glycolysis that catalyzes the first step of the pathway by converting D-glyceraldehyde 3-phosphate (G3P) into 3-phospho-D-glyceroyl phosphate. Essential for the maintenance of cellular ATP levels and carbohydrate metabolism. In Antirrhinum majus (Garden snapdragon), this protein is Glyceraldehyde-3-phosphate dehydrogenase, cytosolic (GAPC).